Reading from the N-terminus, the 623-residue chain is tRNA uridine 5-carboxymethylaminomethyl modification enzyme MnmG (623 aa).

FAD is bound at residue 12–17 (GAGHAG). 272–286 (GPRYCPSIEDKINRF) provides a ligand contact to NAD(+).

Belongs to the MnmG family. As to quaternary structure, homodimer. Heterotetramer of two MnmE and two MnmG subunits. The cofactor is FAD.

The protein localises to the cytoplasm. Its function is as follows. NAD-binding protein involved in the addition of a carboxymethylaminomethyl (cmnm) group at the wobble position (U34) of certain tRNAs, forming tRNA-cmnm(5)s(2)U34. In Christiangramia forsetii (strain DSM 17595 / CGMCC 1.15422 / KT0803) (Gramella forsetii), this protein is tRNA uridine 5-carboxymethylaminomethyl modification enzyme MnmG.